A 184-amino-acid chain; its full sequence is 3-hydroxydecanoyl-[acyl-carrier-protein] dehydratase (184 aa).

His-77 is an active-site residue.

This sequence belongs to the thioester dehydratase family. FabA subfamily. As to quaternary structure, homodimer.

The protein resides in the cytoplasm. The enzyme catalyses a (3R)-hydroxyacyl-[ACP] = a (2E)-enoyl-[ACP] + H2O. The catalysed reaction is (3R)-hydroxydecanoyl-[ACP] = (2E)-decenoyl-[ACP] + H2O. It carries out the reaction (2E)-decenoyl-[ACP] = (3Z)-decenoyl-[ACP]. It participates in lipid metabolism; fatty acid biosynthesis. Its function is as follows. Necessary for the introduction of cis unsaturation into fatty acids. Catalyzes the dehydration of (3R)-3-hydroxydecanoyl-ACP to E-(2)-decenoyl-ACP and then its isomerization to Z-(3)-decenoyl-ACP. Can catalyze the dehydratase reaction for beta-hydroxyacyl-ACPs with saturated chain lengths up to 16:0, being most active on intermediate chain length. In Hyphomonas neptunium (strain ATCC 15444), this protein is 3-hydroxydecanoyl-[acyl-carrier-protein] dehydratase.